A 154-amino-acid chain; its full sequence is Myoglobin (154 aa).

Positions 2-148 (GLSDDEWHHV…FRNDMASKYK (147 aa)) constitute a Globin domain. His-65 contributes to the nitrite binding site. Residue His-65 participates in O2 binding. His-94 contributes to the heme b binding site.

Belongs to the globin family. In terms of assembly, monomeric.

It localises to the cytoplasm. The protein resides in the sarcoplasm. The catalysed reaction is Fe(III)-heme b-[protein] + nitric oxide + H2O = Fe(II)-heme b-[protein] + nitrite + 2 H(+). It catalyses the reaction H2O2 + AH2 = A + 2 H2O. Monomeric heme protein which primary function is to store oxygen and facilitate its diffusion within muscle tissues. Reversibly binds oxygen through a pentacoordinated heme iron and enables its timely and efficient release as needed during periods of heightened demand. Depending on the oxidative conditions of tissues and cells, and in addition to its ability to bind oxygen, it also has a nitrite reductase activity whereby it regulates the production of bioactive nitric oxide. Under stress conditions, like hypoxia and anoxia, it also protects cells against reactive oxygen species thanks to its pseudoperoxidase activity. The chain is Myoglobin (MB) from Graptemys geographica (Common map turtle).